The sequence spans 305 residues: MNRANFGLIKLVTYIPNVGEQSKRLGALLENSIIDLCSADKSIPNDMRSFLSLNSTDKWSKVINVINNINNRRIPIENCKIKAPIEPGKIICIGLNYKEHANEAKMAIPKEPIVFSKFDNAICGPNDSIIKPVESDEVDYEVELVVVIGKQAKNVSESDALQYVAGYTVGNDVSARDWQLRKNNSQWLLGKTFDTFAPIGPSIVINPEVAALSDDTYFDPNNLSIKCTLNGQVVQNSTTKEFIFNIQTVVSYLSKLFTLNPGDIIFTGTPSGVGFIRKPNPIFLKSGDVIKCEIEELGSLVNNVK.

Residues E141, E143, and D172 each coordinate a divalent metal cation.

It belongs to the FAH family. Requires Ca(2+) as cofactor. It depends on Mg(2+) as a cofactor.

Functionally, may have hydrolase activity. The chain is Fumarylacetoacetate hydrolase domain-containing protein 2 homolog (fahd2) from Dictyostelium discoideum (Social amoeba).